The following is a 130-amino-acid chain: Small ribosomal subunit protein uS11 (130 aa).

Belongs to the universal ribosomal protein uS11 family. In terms of assembly, part of the 30S ribosomal subunit. Interacts with proteins S7 and S18. Binds to IF-3.

Its function is as follows. Located on the platform of the 30S subunit, it bridges several disparate RNA helices of the 16S rRNA. Forms part of the Shine-Dalgarno cleft in the 70S ribosome. The sequence is that of Small ribosomal subunit protein uS11 from Synechococcus sp. (strain CC9902).